Here is a 307-residue protein sequence, read N- to C-terminus: Elongation factor Ts (307 aa).

Positions T79 to V82 are involved in Mg(2+) ion dislocation from EF-Tu.

The protein belongs to the EF-Ts family.

Its subcellular location is the cytoplasm. Functionally, associates with the EF-Tu.GDP complex and induces the exchange of GDP to GTP. It remains bound to the aminoacyl-tRNA.EF-Tu.GTP complex up to the GTP hydrolysis stage on the ribosome. This chain is Elongation factor Ts, found in Bartonella henselae (strain ATCC 49882 / DSM 28221 / CCUG 30454 / Houston 1) (Rochalimaea henselae).